We begin with the raw amino-acid sequence, 323 residues long: Protoheme IX farnesyltransferase (323 aa).

8 helical membrane-spanning segments follow: residues 50–70 (IVLI…ANTF), 97–117 (NRDA…WLWL), 118–138 (LCDS…YIFV), 150–170 (NIVW…AVIV), 184–204 (AIVL…ALAM), 231–248 (IVWY…LIPA), 252–274 (IYAA…LHLG), and 293–313 (YLAV…ETIG).

Belongs to the UbiA prenyltransferase family. Protoheme IX farnesyltransferase subfamily.

It localises to the cell membrane. The catalysed reaction is heme b + (2E,6E)-farnesyl diphosphate + H2O = Fe(II)-heme o + diphosphate. It functions in the pathway porphyrin-containing compound metabolism; heme O biosynthesis; heme O from protoheme: step 1/1. In terms of biological role, converts heme B (protoheme IX) to heme O by substitution of the vinyl group on carbon 2 of heme B porphyrin ring with a hydroxyethyl farnesyl side group. In Corynebacterium glutamicum (strain R), this protein is Protoheme IX farnesyltransferase.